Here is a 323-residue protein sequence, read N- to C-terminus: Lipoyl synthase (323 aa).

[4Fe-4S] cluster-binding residues include Cys-61, Cys-66, Cys-72, Cys-87, Cys-91, Cys-94, and Ser-303. Residues 73–292 (WTKKTATFLV…EQYGLSIGIP (220 aa)) enclose the Radical SAM core domain.

This sequence belongs to the radical SAM superfamily. Lipoyl synthase family. It depends on [4Fe-4S] cluster as a cofactor.

It is found in the cytoplasm. The catalysed reaction is [[Fe-S] cluster scaffold protein carrying a second [4Fe-4S](2+) cluster] + N(6)-octanoyl-L-lysyl-[protein] + 2 oxidized [2Fe-2S]-[ferredoxin] + 2 S-adenosyl-L-methionine + 4 H(+) = [[Fe-S] cluster scaffold protein] + N(6)-[(R)-dihydrolipoyl]-L-lysyl-[protein] + 4 Fe(3+) + 2 hydrogen sulfide + 2 5'-deoxyadenosine + 2 L-methionine + 2 reduced [2Fe-2S]-[ferredoxin]. It functions in the pathway protein modification; protein lipoylation via endogenous pathway; protein N(6)-(lipoyl)lysine from octanoyl-[acyl-carrier-protein]: step 2/2. Functionally, catalyzes the radical-mediated insertion of two sulfur atoms into the C-6 and C-8 positions of the octanoyl moiety bound to the lipoyl domains of lipoate-dependent enzymes, thereby converting the octanoylated domains into lipoylated derivatives. The sequence is that of Lipoyl synthase from Protochlamydia amoebophila (strain UWE25).